We begin with the raw amino-acid sequence, 519 residues long: Sorting nexin-2 (519 aa).

Disordered regions lie at residues M1–E20 and S30–V103. Composition is skewed to low complexity over residues S30–P44 and S93–V103. Position 97 is a phosphoserine (S97). A phosphothreonine mark is found at T101 and T104. S117 and S119 each carry phosphoserine. The PX domain maps to F140 to R269. Residues R183, S185, K211, and R235 each coordinate a 1,2-diacyl-sn-glycero-3-phospho-(1D-myo-inositol-3-phosphate). Phosphoserine is present on S185. The interaction with RhoG stretch occupies residues Q260–A519. Phosphoserine is present on S277. The tract at residues G278–M295 is membrane-binding amphipathic helix. The BAR domain occupies M299 to A519. An N6-acetyllysine modification is found at K469.

Belongs to the sorting nexin family. As to quaternary structure, predominantly forms heterodimers with BAR domain-containing sorting nexins SNX5, SNX6 and SNX32; can self-associate to form homodimers. The heterodimers are proposed to self-assemble into helical arrays on the membrane to stabilize and expand local membrane curvature underlying endosomal tubule formation. Thought to be a component of the originally described retromer complex (also called SNX-BAR retromer) which is a pentamer containing the heterotrimeric retromer cargo-selective complex (CSC), also decribed as vacuolar protein sorting subcomplex (VPS) and a heterodimeric membrane-deforming subcomplex formed between SNX1 or SNX2 and SNX5 or SNX6 (also called SNX-BAR subcomplex); the respective CSC and SNX-BAR subcomplexes associate with low affinity. Interacts with SNX5, SNX6, SNX32, VPS26A, VPS29, VPS35, FNBP1, KALRN, RHOG (GDP-bound form).

The protein localises to the early endosome membrane. Its subcellular location is the cell projection. It is found in the lamellipodium. In terms of biological role, involved in several stages of intracellular trafficking. Interacts with membranes containing phosphatidylinositol 3-phosphate (PtdIns(3P)) or phosphatidylinositol 3,5-bisphosphate (PtdIns(3,5)P2). Acts in part as component of the retromer membrane-deforming SNX-BAR subcomplex. The SNX-BAR retromer mediates retrograde transport of cargo proteins from endosomes to the trans-Golgi network (TGN) and is involved in endosome-to-plasma membrane transport for cargo protein recycling. The SNX-BAR subcomplex functions to deform the donor membrane into a tubular profile called endosome-to-TGN transport carrier (ETC). Can sense membrane curvature and has in vitro vesicle-to-membrane remodeling activity. Required for retrograde endosome-to-TGN transport of TGN38. Promotes KALRN- and RHOG-dependent but retromer-independent membrane remodeling such as lamellipodium formation; the function is dependent on GEF activity of KALRN. The sequence is that of Sorting nexin-2 (SNX2) from Bos taurus (Bovine).